We begin with the raw amino-acid sequence, 430 residues long: Glial fibrillary acidic protein (430 aa).

The tract at residues 1 to 31 is disordered; the sequence is MERRRITSARRSYASSETMVRGHGPTRHLGT. The segment at 1–70 is head; sequence MERRRITSAR…KETRASERAE (70 aa). Phosphothreonine; by AURKB and ROCK1 is present on Thr7. A compositionally biased stretch (polar residues) spans 9-18; sequence ARRSYASSET. Omega-N-methylarginine is present on Arg11. Position 12 is a phosphoserine (Ser12). Omega-N-methylarginine is present on Arg21. Arg34 is modified (citrulline). Ser36 is modified (phosphoserine; by AURKB and ROCK1). Position 41 is a phosphothreonine (Thr41). Positions 67 to 375 constitute an IF rod domain; sequence ERAEMMELND…KLLEGEENRI (309 aa). A coil 1A region spans residues 71-102; the sequence is MMELNDRFASYIEKVRFLEQQNKALAAELNQL. Ser80 carries the post-translational modification Phosphoserine. Residues 103 to 113 form a linker 1 region; sequence RAKEPTKLADV. Phosphothreonine occurs at positions 108 and 148. Residues 114-212 are coil 1B; that stretch reads YQAELRELRL…EEEVRELQEQ (99 aa). Residues 213-228 are linker 12; sequence LAQQQVHVEMDVAKPD. Residues 229–250 form a coil 2A region; that stretch reads LTAALREIRTQYEAVATSNMQE. A linker 2 region spans residues 251–254; sequence TEEW. The interval 255–375 is coil 2B; it reads YRSKFADLTD…KLLEGEENRI (121 aa). The residue at position 267 (Ser267) is a Phosphoserine. Position 268 is a citrulline (Arg268). A Phosphoserine modification is found at Ser321. The tail stretch occupies residues 376-430; it reads TIPVQTFSNLQIRETSLDTKSVSEGHLKRNIVVKTVEMRDGEVIKESKQEHKDVM. Phosphothreonine is present on Thr381. At Ser383 the chain carries Phosphoserine. Citrulline occurs at positions 404 and 414.

The protein belongs to the intermediate filament family. Interacts with SYNM. As to quaternary structure, interacts with PSEN1 (via N-terminus). Phosphorylated by PKN1. In terms of tissue distribution, expressed in the cortex and hippocampus. Expression decreases following acute and chronic corticosterone treatment.

The protein localises to the cytoplasm. Its function is as follows. GFAP, a class-III intermediate filament, is a cell-specific marker that, during the development of the central nervous system, distinguishes astrocytes from other glial cells. The polypeptide is Glial fibrillary acidic protein (Gfap) (Rattus norvegicus (Rat)).